The sequence spans 1320 residues: MIKNLRGAPALSDFRVKKLLAQCEQLQLPVNDIYAEFAHFTKLNEELSTSEEKVLQQLLTYGPTIEEHQPAGLFLLVTPRPGTISPWSSKSTDIAHNCGLAKVERLERGIAYYVTLENDAQLSTSQEAQLNTLLHDRMMESIFNDFAQASTLFASSEPGELTAIDIESGGKNALVQANIELGLALAEDEVNYLFENFTKLGRNPHDIELYMFAQANSEHCRHKIFNAEWTIDGVKQEKSLFKMIRNTHEINPDYVLSAYKDNAAVMVGNKGGRFFPNPETNVYGYNHEDIQILMKVETHNHPTAISPYPGAATGSGGEIRDEGATGIGSKPKAGLVGFSVSNLRIPDFVQPWETDFGKPSRIVTAFDIMIEGPLGGAAFNNEFGRPAILGYFRTYEEEVNSFNGKEVRGYHKPIMLAGGLGNIRDEHVQKREIIVGANLIALGGPAMNIGLGGGAASSMASGQSAESLDFASVQRENPEMERRCQEVIDKCWQLGEENPIAFIHDVGAGGLSNAFPELVADGGRGGIFELRNVPNDERSMAPHEIWCNESQERYVIAVSDKNLATFEQICQRERAPYSVVGRATEEEHLTVTDSHFSDNEKLNTPIDLPLDVLLGKTPKIYKDVKTATAAGDSLDLSTVTLADAADRILSLPTVAEKTFLITIGDRSVTGMVNRDQMVGPWQVPVADCGVTASALDSYHGEAMSLGERTPVALLNFGASARLAVAESLTNIAGTDIGDLNRIKLSANWMSPAGHPGEDAGLYEAVKAIGEELCPALGLTIPVGKDSMSMKTQWEENGEQKSVTSPLSLVITAFGVVEDIRKTVTPELRTDKGDTRLVAIDLSKGKKRLGGSCLAQVYKQLGSETPDVDDAEVLKGFFNAMQTLVRAEKVIAYHDISDGGLFTTVTEMAFAGHTGVDIDISKLSNGANDDLATLFNEELGGVIQIRESDVDAIHAILAQHGILENCTDIGRLNNEDTIRFSRDGEVVLENSRTYYRTVWAQTTYRMQSLRDNPECAQQEHDVKFDTEDPGLNTELTFDINEDIVADLIIRDAVKDAENSANDITNPRVAILREQGVNSHVEMAAAFDRAGFVAIDVHMSDILSGRADLADFNGLVACGGFSYGDVLGAGEGWAKSILFNANARTMFKTFFEREDTFTLGVCNGCQMLSNLKDIIPGSEHWPHFVQNKSERFEARFSLVEIQESPSVLFKGMEGSRMPIAVSHGEGHAEFSSDAAIDAANNSGTVSMRYVNNYGDVTETYPANPNGSVDGITSLTTTDGRVTIMMPHPERVFRTVANSWHPDSWGEDSPWVRMFRNARAFIG.

Residues 310–321 and Ala-686 each bind ATP; that span reads GAATGSGGEIRD. Mg(2+)-binding residues include Asp-687, Glu-726, Asn-730, and Asp-894. Ser-896 serves as a coordination point for ATP. The Glutamine amidotransferase type-1 domain maps to 1067–1320; it reads VAILREQGVN…MFRNARAFIG (254 aa). Cys-1160 acts as the Nucleophile in catalysis. Residues His-1285 and Glu-1287 contribute to the active site.

This sequence in the N-terminal section; belongs to the FGAMS family. As to quaternary structure, monomer.

The protein resides in the cytoplasm. It catalyses the reaction N(2)-formyl-N(1)-(5-phospho-beta-D-ribosyl)glycinamide + L-glutamine + ATP + H2O = 2-formamido-N(1)-(5-O-phospho-beta-D-ribosyl)acetamidine + L-glutamate + ADP + phosphate + H(+). It functions in the pathway purine metabolism; IMP biosynthesis via de novo pathway; 5-amino-1-(5-phospho-D-ribosyl)imidazole from N(2)-formyl-N(1)-(5-phospho-D-ribosyl)glycinamide: step 1/2. In terms of biological role, phosphoribosylformylglycinamidine synthase involved in the purines biosynthetic pathway. Catalyzes the ATP-dependent conversion of formylglycinamide ribonucleotide (FGAR) and glutamine to yield formylglycinamidine ribonucleotide (FGAM) and glutamate. The protein is Phosphoribosylformylglycinamidine synthase of Colwellia psychrerythraea (strain 34H / ATCC BAA-681) (Vibrio psychroerythus).